The primary structure comprises 264 residues: L-aspartate dehydrogenase (264 aa).

The NAD(+) site is built by alanine 120 and asparagine 186. Residue histidine 216 is part of the active site.

It belongs to the L-aspartate dehydrogenase family.

The catalysed reaction is L-aspartate + NADP(+) + H2O = oxaloacetate + NH4(+) + NADPH + H(+). The enzyme catalyses L-aspartate + NAD(+) + H2O = oxaloacetate + NH4(+) + NADH + H(+). It functions in the pathway cofactor biosynthesis; NAD(+) biosynthesis; iminoaspartate from L-aspartate (dehydrogenase route): step 1/1. In terms of biological role, specifically catalyzes the NAD or NADP-dependent dehydrogenation of L-aspartate to iminoaspartate. This is L-aspartate dehydrogenase from Serratia proteamaculans (strain 568).